A 313-amino-acid chain; its full sequence is Ribosomal RNA small subunit methyltransferase H (313 aa).

Residues 34 to 36 (GGH), Asp-53, Phe-80, Asp-101, and Gln-108 contribute to the S-adenosyl-L-methionine site.

The protein belongs to the methyltransferase superfamily. RsmH family.

The protein resides in the cytoplasm. The enzyme catalyses cytidine(1402) in 16S rRNA + S-adenosyl-L-methionine = N(4)-methylcytidine(1402) in 16S rRNA + S-adenosyl-L-homocysteine + H(+). Specifically methylates the N4 position of cytidine in position 1402 (C1402) of 16S rRNA. This Lacticaseibacillus casei (strain BL23) (Lactobacillus casei) protein is Ribosomal RNA small subunit methyltransferase H.